Reading from the N-terminus, the 525-residue chain is MNDLKKSPLLILDFGSQYTQLIARRVREMGVYCEIYPYNINHEQFKKLNPCGVILSGGPSTVTHDANPRAPQWLFESDLPLLGICYGMQTMAVQLGGQVHSSTLREFGYAELRLHGHSQLLSNIEDRTAMDGSALLDVWMSHGDKVTELPPGFKVICETRNAPIAGMADESRQMYGLQFHPEVTHTLQGLRILQRFVVDICKASTDWTPEHIIDEAINKIREQVGTEKVLLGLSGGVDSSVVAALLHRAIGEQLVCVFVDTGLLRLNEAEQVLSMFGRHMGIRIIAVNAEDKFLTALKGVTCPEEKRKIIGRTFIEVFDEEAQKLTDIKWLAQGTIYPDVIESAATSTNDAAVVIKSHHNVGGLPDTLNLKLLEPIRELFKDEVRHVGLELGLPHDMVYRHPFPGPGLGVRILAEVKKEYADILRKADAIFIEELHNAQLYHKISQAFAVFLPVKSVGVMGDGRRYDYVICLRAVETVDFMTAHWSQLPWDFLGKVSNRIINEVEGVSRVTYDISGKPPATIEWE.

The 199-residue stretch at 8-206 (PLLILDFGSQ…VVDICKASTD (199 aa)) folds into the Glutamine amidotransferase type-1 domain. The active-site Nucleophile is Cys85. Residues His180 and Glu182 contribute to the active site. The 194-residue stretch at 207-400 (WTPEHIIDEA…LGLPHDMVYR (194 aa)) folds into the GMPS ATP-PPase domain. Residue 234 to 240 (SGGVDSS) coordinates ATP.

In terms of assembly, homodimer.

It carries out the reaction XMP + L-glutamine + ATP + H2O = GMP + L-glutamate + AMP + diphosphate + 2 H(+). Its pathway is purine metabolism; GMP biosynthesis; GMP from XMP (L-Gln route): step 1/1. Its function is as follows. Catalyzes the synthesis of GMP from XMP. The polypeptide is GMP synthase [glutamine-hydrolyzing] (Legionella pneumophila (strain Paris)).